A 548-amino-acid chain; its full sequence is Glucose-6-phosphate isomerase (548 aa).

The Proton donor role is filled by glutamate 355. Residues histidine 386 and lysine 514 contribute to the active site.

It belongs to the GPI family.

It is found in the cytoplasm. The catalysed reaction is alpha-D-glucose 6-phosphate = beta-D-fructose 6-phosphate. It participates in carbohydrate biosynthesis; gluconeogenesis. It functions in the pathway carbohydrate degradation; glycolysis; D-glyceraldehyde 3-phosphate and glycerone phosphate from D-glucose: step 2/4. Its function is as follows. Catalyzes the reversible isomerization of glucose-6-phosphate to fructose-6-phosphate. In Yersinia enterocolitica serotype O:8 / biotype 1B (strain NCTC 13174 / 8081), this protein is Glucose-6-phosphate isomerase.